Consider the following 184-residue polypeptide: ATP synthase subunit b, chloroplastic (184 aa).

A helical transmembrane segment spans residues 27–49; sequence FATNPINLSVVLGVLIFFGKGVL.

The protein belongs to the ATPase B chain family. F-type ATPases have 2 components, F(1) - the catalytic core - and F(0) - the membrane proton channel. F(1) has five subunits: alpha(3), beta(3), gamma(1), delta(1), epsilon(1). F(0) has four main subunits: a(1), b(1), b'(1) and c(10-14). The alpha and beta chains form an alternating ring which encloses part of the gamma chain. F(1) is attached to F(0) by a central stalk formed by the gamma and epsilon chains, while a peripheral stalk is formed by the delta, b and b' chains.

It is found in the plastid. It localises to the chloroplast thylakoid membrane. In terms of biological role, f(1)F(0) ATP synthase produces ATP from ADP in the presence of a proton or sodium gradient. F-type ATPases consist of two structural domains, F(1) containing the extramembraneous catalytic core and F(0) containing the membrane proton channel, linked together by a central stalk and a peripheral stalk. During catalysis, ATP synthesis in the catalytic domain of F(1) is coupled via a rotary mechanism of the central stalk subunits to proton translocation. Component of the F(0) channel, it forms part of the peripheral stalk, linking F(1) to F(0). The polypeptide is ATP synthase subunit b, chloroplastic (Amborella trichopoda).